We begin with the raw amino-acid sequence, 283 residues long: Large ribosomal subunit protein uL2 (283 aa).

Disordered regions lie at residues 34–53 (TEPYKKKGGRNNYGRITARH) and 224–283 (AMNP…KKKK). Gly residues predominate over residues 232 to 245 (NGGGQGKSKGGGGW). Residues 256–268 (AKGKKTRHKRKNS) show a composition bias toward basic residues.

It belongs to the universal ribosomal protein uL2 family. Part of the 50S ribosomal subunit. Forms a bridge to the 30S subunit in the 70S ribosome.

Functionally, one of the primary rRNA binding proteins. Required for association of the 30S and 50S subunits to form the 70S ribosome, for tRNA binding and peptide bond formation. It has been suggested to have peptidyltransferase activity; this is somewhat controversial. Makes several contacts with the 16S rRNA in the 70S ribosome. The protein is Large ribosomal subunit protein uL2 of Methylacidiphilum infernorum (isolate V4) (Methylokorus infernorum (strain V4)).